The following is a 505-amino-acid chain: MDLLLLEKTLIGLFIAIIIATIVSKLRSKRFKLPPGPIPVPVFGNWLQVGDDLNHRNLTEYAKKFGDLFLLRMGQRNLVVVSSPDLAKEVLHTQGVEFGSRTRNVVFDIFTGKGQDMVFTVYGEHWRKMRRIMTVPFFTNKVVQQYRGGWEYEVESVVEDVKKMKESNTNGIVLRKRLQLMMYNNMFRIMFDRRFESEDDPLFVKLKALNGERSRLAQSFEYNYGDFIPILRPFLRGYLKICKEVKEKRLKLFKDYFVDERKKLANTKSMDSNALKCAIDHILEAQQKGEINEDNVLYIVENINVAAIETTLWSIEWGIAELVNHPHIQKKLRDEIDTVLGPGVQVTEPDTHKLPYLQAVIKETLRLRMAIPLLVPHMNLHEAKLGGYDIPAESKILVNAWWLANNPAHWKNPEEFRPERFFEEEKHVEANGNDFRYLPFGVGRRSCPGIILALPILGITLGRLVQNFELLPPPGQSKIDTTEKGGQFSLHILKHSTIVLKPRSF.

Short sequence motifs (nuclear localization signal) lie at residues 161-168 (VKKMKESN) and 247-254 (EKRLKLFK). Position 447 (cysteine 447) interacts with heme.

This sequence belongs to the cytochrome P450 family. Heme serves as cofactor.

The protein resides in the nucleus. The enzyme catalyses (E)-cinnamate + reduced [NADPH--hemoprotein reductase] + O2 = (E)-4-coumarate + oxidized [NADPH--hemoprotein reductase] + H2O + H(+). It participates in phenylpropanoid metabolism; trans-4-coumarate biosynthesis; trans-4-coumarate from trans-cinnamate: step 1/1. Its function is as follows. Component of the floral volatile benzenoid/phenylpropanoid (FVBP) biosynthetic pathway that controls carbon flux to pigments essential for pollination or UV protection, to numerous pytoalexins synthesized by plants when challenged by pathogens, and to lignins. The chain is Trans-cinnamate 4-monooxygenase C4H2 from Petunia hybrida (Petunia).